We begin with the raw amino-acid sequence, 416 residues long: ATP-dependent Clp protease ATP-binding subunit ClpX (416 aa).

Residues 1–54 enclose the ClpX-type ZB domain; sequence MFKFGDEKGQLKCSFCGKSQEQVRKLVAGPGVYICDECIELCNEIIEEELNDDV. 4 residues coordinate Zn(2+): Cys13, Cys16, Cys35, and Cys38. Position 117 to 124 (117 to 124) interacts with ATP; that stretch reads PTGCGKTL.

This sequence belongs to the ClpX chaperone family. As to quaternary structure, component of the ClpX-ClpP complex. Forms a hexameric ring that, in the presence of ATP, binds to fourteen ClpP subunits assembled into a disk-like structure with a central cavity, resembling the structure of eukaryotic proteasomes.

Its function is as follows. ATP-dependent specificity component of the Clp protease. It directs the protease to specific substrates. Can perform chaperone functions in the absence of ClpP. This Halothermothrix orenii (strain H 168 / OCM 544 / DSM 9562) protein is ATP-dependent Clp protease ATP-binding subunit ClpX.